A 484-amino-acid polypeptide reads, in one-letter code: tRNA sulfurtransferase (484 aa).

Residues 63-167 (ERLVEALKCI…NKDLFIVTQR (105 aa)) enclose the THUMP domain. Residues 185 to 186 (LM), K267, G289, and Q298 each bind ATP. Residues C346 and C458 are joined by a disulfide bond. The Rhodanese domain maps to 406–484 (IPENAVVVDI…GFKNVKVYRP (79 aa)). C458 acts as the Cysteine persulfide intermediate in catalysis.

It belongs to the ThiI family.

The protein localises to the cytoplasm. It catalyses the reaction [ThiI sulfur-carrier protein]-S-sulfanyl-L-cysteine + a uridine in tRNA + 2 reduced [2Fe-2S]-[ferredoxin] + ATP + H(+) = [ThiI sulfur-carrier protein]-L-cysteine + a 4-thiouridine in tRNA + 2 oxidized [2Fe-2S]-[ferredoxin] + AMP + diphosphate. The catalysed reaction is [ThiS sulfur-carrier protein]-C-terminal Gly-Gly-AMP + S-sulfanyl-L-cysteinyl-[cysteine desulfurase] + AH2 = [ThiS sulfur-carrier protein]-C-terminal-Gly-aminoethanethioate + L-cysteinyl-[cysteine desulfurase] + A + AMP + 2 H(+). Its pathway is cofactor biosynthesis; thiamine diphosphate biosynthesis. Catalyzes the ATP-dependent transfer of a sulfur to tRNA to produce 4-thiouridine in position 8 of tRNAs, which functions as a near-UV photosensor. Also catalyzes the transfer of sulfur to the sulfur carrier protein ThiS, forming ThiS-thiocarboxylate. This is a step in the synthesis of thiazole, in the thiamine biosynthesis pathway. The sulfur is donated as persulfide by IscS. This chain is tRNA sulfurtransferase, found in Colwellia psychrerythraea (strain 34H / ATCC BAA-681) (Vibrio psychroerythus).